An 867-amino-acid chain; its full sequence is Bifunctional isopimaradiene synthase, chloroplastic (867 aa).

The transit peptide at 1–68 directs the protein to the chloroplast; it reads MALLSSSLSS…VGEGTTSLPY (68 aa). Lys-267 is a binding site for substrate. Residues Asp-400 and Asp-402 each coordinate Mg(2+). The DXDD motif motif lies at 400-403; sequence DIDD. Lys-487 contributes to the substrate binding site. Residues Asp-619, Asp-623, Asn-763, Thr-767, and Glu-771 each contribute to the Mg(2+) site. The DDXXD motif motif lies at 619–623; the sequence is DDLYD.

This sequence belongs to the terpene synthase family. Tpsd subfamily. Mg(2+) is required as a cofactor.

The protein resides in the plastid. It localises to the chloroplast. It carries out the reaction (2E,6E,10E)-geranylgeranyl diphosphate = (+)-copalyl diphosphate. It catalyses the reaction (+)-copalyl diphosphate = isopimara-7,15-diene + diphosphate. It functions in the pathway terpene metabolism; oleoresin biosynthesis. Involved in defensive oleoresin formation in conifers in response to insect attack or other injury. Involved in diterpene (C20) olefins biosynthesis. Bifunctional enzyme that catalyzes two sequential cyclizations of geranylgeranyl diphosphate (GGPP) to isopimara-7,15-diene. The protein is Bifunctional isopimaradiene synthase, chloroplastic (TPS-ISO) of Picea abies (Norway spruce).